The sequence spans 60 residues: Cecropin-B type 1 (60 aa).

An N-terminal signal peptide occupies residues 1-24; sequence MNFNKLFALVLLIGLVLLTGQTEA. Ile-58 is modified (isoleucine amide).

It belongs to the cecropin family.

It is found in the secreted. Its function is as follows. Cecropins have lytic and antibacterial activity against several Gram-positive and Gram-negative bacteria. The chain is Cecropin-B type 1 (CECB1) from Aedes albopictus (Asian tiger mosquito).